The following is a 338-amino-acid chain: S-adenosylmethionine:tRNA ribosyltransferase-isomerase (338 aa).

Belongs to the QueA family. In terms of assembly, monomer.

Its subcellular location is the cytoplasm. The catalysed reaction is 7-aminomethyl-7-carbaguanosine(34) in tRNA + S-adenosyl-L-methionine = epoxyqueuosine(34) in tRNA + adenine + L-methionine + 2 H(+). The protein operates within tRNA modification; tRNA-queuosine biosynthesis. Its function is as follows. Transfers and isomerizes the ribose moiety from AdoMet to the 7-aminomethyl group of 7-deazaguanine (preQ1-tRNA) to give epoxyqueuosine (oQ-tRNA). The sequence is that of S-adenosylmethionine:tRNA ribosyltransferase-isomerase from Francisella tularensis subsp. mediasiatica (strain FSC147).